The sequence spans 702 residues: K(+)-insensitive pyrophosphate-energized proton pump (702 aa).

4 consecutive transmembrane segments (helical) span residues 3–23 (GIYL…ALTI), 63–83 (AVVF…GFLI), 130–150 (MLVA…LVGI), and 162–182 (VALG…GGIF). Substrate is bound at residue K184. Residues D187, D191, N214, and D217 each contribute to the Mg(2+) site. The next 6 membrane-spanning stretches (helical) occupy residues 234-254 (AVTV…VPAM), 255-275 (TSMM…SILG), 294-314 (GFLV…AIVP), 329-349 (GFDL…LIWV), 379-399 (GLAI…AAII), and 407-427 (LFGI…VVAL). Residue D435 coordinates Mg(2+). The next 4 membrane-spanning stretches (helical) occupy residues 466–486 (AVTK…LFAA), 517–537 (YVVV…SMGM), 586–606 (IIPS…ILGI), and 612–632 (AFSA…FVAI). Positions 642, 668, and 672 each coordinate Ca(2+). K675 contributes to the substrate binding site.

This sequence belongs to the H(+)-translocating pyrophosphatase (TC 3.A.10) family. K(+)-insensitive subfamily. Homodimer. Requires Mg(2+) as cofactor.

The protein resides in the cell inner membrane. The enzyme catalyses diphosphate + H2O + H(+)(in) = 2 phosphate + 2 H(+)(out). Its function is as follows. Proton pump that utilizes the energy of pyrophosphate hydrolysis as the driving force for proton movement across the membrane. Generates a proton motive force. The chain is K(+)-insensitive pyrophosphate-energized proton pump from Rhodospirillum rubrum (strain ATCC 11170 / ATH 1.1.1 / DSM 467 / LMG 4362 / NCIMB 8255 / S1).